The chain runs to 114 residues: Tyrosine-protein phosphatase 11 (114 aa).

A Tyrosine-protein phosphatase domain is found at 1 to 114 (WRMIWEHNTR…EAKHTGPTIV (114 aa)). D81 serves as a coordination point for substrate.

It belongs to the protein-tyrosine phosphatase family.

The catalysed reaction is O-phospho-L-tyrosyl-[protein] + H2O = L-tyrosyl-[protein] + phosphate. This Styela plicata (Wrinkled sea squirt) protein is Tyrosine-protein phosphatase 11 (STY-11).